A 442-amino-acid polypeptide reads, in one-letter code: D(2) dopamine receptor A (442 aa).

Residues 1-31 (MDPQNLSMYNDDINNGTNGTAVDQKPHYNYY) are Extracellular-facing. N-linked (GlcNAc...) asparagine glycans are attached at residues Asn5, Asn15, and Asn18. Residues 32–54 (AMLLTLLVFVIVFGNVLVCIAVS) traverse the membrane as a helical segment. Topologically, residues 55–64 (REKALQTTTN) are cytoplasmic. A helical transmembrane segment spans residues 65-87 (YLIVSLAVADLLVATLVMPWAVY). At 88–102 (MEVVGEWRFSRIHCD) the chain is on the extracellular side. Cys101 and Cys176 form a disulfide bridge. The helical transmembrane segment at 103–124 (IFVTLDVMMCTASILNLCAISI) threads the bilayer. At 125–145 (DRYTAVAMPMLYNTRYSSKRR) the chain is on the cytoplasmic side. Residues 146–166 (VTVMISVVWVLSFAISCPLLF) traverse the membrane as a helical segment. Residues 167-182 (GLNNTGSKVCIIDNPA) are Extracellular-facing. A helical transmembrane segment spans residues 183 to 207 (FVIYSSIVSFYVPFIVTLLVYVQIY). The Cytoplasmic segment spans residues 208 to 372 (IVLRKRRKRV…SQHKEKKATQ (165 aa)). Positions 273-335 (DMEMEMMSST…KNGHPKDSTK (63 aa)) are disordered. A compositionally biased stretch (polar residues) spans 304–318 (ATSNQCKNASLTSPV). Basic and acidic residues predominate over residues 322-335 (YKAEKNGHPKDSTK). A helical membrane pass occupies residues 373-394 (MLAIVLGVFIICWLPFFIIHIL). Topologically, residues 395–408 (NMHCNCNIPQALYS) are extracellular. Cysteines 398 and 400 form a disulfide. A helical membrane pass occupies residues 409 to 430 (AFTWLGYVNSAVNPIIYTTFNV). Residues 431–442 (EFRKAFIKILHC) are Cytoplasmic-facing. Cys442 carries S-palmitoyl cysteine lipidation.

This sequence belongs to the G-protein coupled receptor 1 family. Post-translationally, palmitoylated. Palmitoylation is probably required for proper localization to the plasma membrane and stability of the receptor. Brain; pituitary.

It is found in the cell membrane. It localises to the golgi apparatus membrane. This is one of the five types (D1 to D5) of receptors for dopamine. The activity of this receptor is mediated by G proteins which inhibits adenylyl cyclase. In Xenopus D2R is involved in the regulation of the melanotrope cells of the intermediate pituitary during background adaptation of the animal. In Xenopus laevis (African clawed frog), this protein is D(2) dopamine receptor A (drd2-a).